The chain runs to 153 residues: uncharacterized protein (153 aa).

Positions 1–22 (MKAFNKLFSLVVASVLVFSLAG) are cleaved as a signal peptide. A lipid anchor (N-palmitoyl cysteine) is attached at Cys23. A lipid anchor (S-diacylglycerol cysteine) is attached at Cys23.

The protein to L.monocytogenes lmo0207.

Its subcellular location is the cell membrane. This is an uncharacterized protein from Escherichia coli (strain K12).